A 335-amino-acid chain; its full sequence is Ketol-acid reductoisomerase (NADP(+)) (335 aa).

In terms of domain architecture, KARI N-terminal Rossmann spans 1-182 (MATIIYDNET…GATRAGVYET (182 aa)). NADP(+) contacts are provided by residues 25–28 (YGSQ), R48, S51, S53, and 83–86 (DEKQ). H108 is an active-site residue. G134 provides a ligand contact to NADP(+). Positions 183–328 (TFREETETDL…KEIRANIPWL (146 aa)) constitute a KARI C-terminal knotted domain. Residues D191, E195, E227, and E231 each contribute to the Mg(2+) site. S252 contacts substrate.

The protein belongs to the ketol-acid reductoisomerase family. Mg(2+) serves as cofactor.

It carries out the reaction (2R)-2,3-dihydroxy-3-methylbutanoate + NADP(+) = (2S)-2-acetolactate + NADPH + H(+). It catalyses the reaction (2R,3R)-2,3-dihydroxy-3-methylpentanoate + NADP(+) = (S)-2-ethyl-2-hydroxy-3-oxobutanoate + NADPH + H(+). Its pathway is amino-acid biosynthesis; L-isoleucine biosynthesis; L-isoleucine from 2-oxobutanoate: step 2/4. The protein operates within amino-acid biosynthesis; L-valine biosynthesis; L-valine from pyruvate: step 2/4. Functionally, involved in the biosynthesis of branched-chain amino acids (BCAA). Catalyzes an alkyl-migration followed by a ketol-acid reduction of (S)-2-acetolactate (S2AL) to yield (R)-2,3-dihydroxy-isovalerate. In the isomerase reaction, S2AL is rearranged via a Mg-dependent methyl migration to produce 3-hydroxy-3-methyl-2-ketobutyrate (HMKB). In the reductase reaction, this 2-ketoacid undergoes a metal-dependent reduction by NADPH to yield (R)-2,3-dihydroxy-isovalerate. This is Ketol-acid reductoisomerase (NADP(+)) from Methanosarcina acetivorans (strain ATCC 35395 / DSM 2834 / JCM 12185 / C2A).